Here is a 372-residue protein sequence, read N- to C-terminus: Phenylalanine--tRNA ligase alpha subunit (372 aa).

Position 276 (Glu-276) interacts with Mg(2+).

It belongs to the class-II aminoacyl-tRNA synthetase family. Phe-tRNA synthetase alpha subunit type 1 subfamily. As to quaternary structure, tetramer of two alpha and two beta subunits. Mg(2+) is required as a cofactor.

The protein localises to the cytoplasm. The enzyme catalyses tRNA(Phe) + L-phenylalanine + ATP = L-phenylalanyl-tRNA(Phe) + AMP + diphosphate + H(+). This chain is Phenylalanine--tRNA ligase alpha subunit, found in Thermobifida fusca (strain YX).